The primary structure comprises 82 residues: uncharacterized protein (82 aa).

The span at 1 to 11 (MKARGSRENAS) shows a compositional bias: basic and acidic residues. Residues 1–25 (MKARGSRENASKRRPSQTQYDTHLR) form a disordered region. Over residues 16 to 25 (SQTQYDTHLR) the composition is skewed to polar residues.

This is an uncharacterized protein from Human cytomegalovirus (strain AD169) (HHV-5).